Reading from the N-terminus, the 384-residue chain is Dual-specificity RNA methyltransferase RlmN (384 aa).

Glu-93 serves as the catalytic Proton acceptor. The Radical SAM core domain maps to 99 to 339 (EDTRGTLCVS…TTIRKTRGDD (241 aa)). An intrachain disulfide couples Cys-106 to Cys-344. Residues Cys-113, Cys-117, and Cys-120 each contribute to the [4Fe-4S] cluster site. S-adenosyl-L-methionine-binding positions include 170-171 (GE), Ser-202, 224-226 (SLH), and Asn-301. Cys-344 (S-methylcysteine intermediate) is an active-site residue.

It belongs to the radical SAM superfamily. RlmN family. [4Fe-4S] cluster is required as a cofactor.

Its subcellular location is the cytoplasm. The enzyme catalyses adenosine(2503) in 23S rRNA + 2 reduced [2Fe-2S]-[ferredoxin] + 2 S-adenosyl-L-methionine = 2-methyladenosine(2503) in 23S rRNA + 5'-deoxyadenosine + L-methionine + 2 oxidized [2Fe-2S]-[ferredoxin] + S-adenosyl-L-homocysteine. The catalysed reaction is adenosine(37) in tRNA + 2 reduced [2Fe-2S]-[ferredoxin] + 2 S-adenosyl-L-methionine = 2-methyladenosine(37) in tRNA + 5'-deoxyadenosine + L-methionine + 2 oxidized [2Fe-2S]-[ferredoxin] + S-adenosyl-L-homocysteine. Specifically methylates position 2 of adenine 2503 in 23S rRNA and position 2 of adenine 37 in tRNAs. m2A2503 modification seems to play a crucial role in the proofreading step occurring at the peptidyl transferase center and thus would serve to optimize ribosomal fidelity. This is Dual-specificity RNA methyltransferase RlmN from Cupriavidus metallidurans (strain ATCC 43123 / DSM 2839 / NBRC 102507 / CH34) (Ralstonia metallidurans).